The primary structure comprises 290 residues: Oxaloacetate decarboxylase (290 aa).

Residue Ser53 coordinates substrate. Asp91 serves as a coordination point for Mg(2+). Positions 162 and 238 each coordinate substrate.

Belongs to the isocitrate lyase/PEP mutase superfamily. Oxaloacetate decarboxylase family. In terms of assembly, homotetramer; dimer of dimers. The cofactor is Mg(2+).

The enzyme catalyses oxaloacetate + H(+) = pyruvate + CO2. Catalyzes the decarboxylation of oxaloacetate into pyruvate. Seems to play a role in maintaining cellular concentrations of bicarbonate and pyruvate. This Ectopseudomonas mendocina (strain ymp) (Pseudomonas mendocina) protein is Oxaloacetate decarboxylase.